A 499-amino-acid polypeptide reads, in one-letter code: Anaerobic nitric oxide reductase flavorubredoxin (499 aa).

The segment at 30 to 210 is zinc metallo-hydrolase; sequence TKGTSYNSYL…PFSALVTAKI (181 aa). Fe cation is bound by residues His-79, Glu-81, Asp-83, His-147, Asp-166, and His-227. The Flavodoxin-like domain occupies 254 to 393; that stretch reads ITLFYDSMSN…LCREHGQFIA (140 aa). Residues 260-264 and 342-369 each bind FMN; these read SMSNN and AFGS…ETAV. The Rubredoxin-like domain maps to 447-498; that stretch reads KQCMLCTVCNWVYDPEIGEPNQGVEPNTAWIDVPDYFLCPECNLGKDVFVEV. Fe cation is bound by residues Cys-452, Cys-455, Cys-485, and Cys-488.

In the N-terminal section; belongs to the zinc metallo-hydrolase group 3 family. In terms of assembly, homotetramer. Fe cation is required as a cofactor. Requires FMN as cofactor.

It localises to the cytoplasm. The protein operates within nitrogen metabolism; nitric oxide reduction. Anaerobic nitric oxide reductase; uses NADH to detoxify nitric oxide (NO), protecting several 4Fe-4S NO-sensitive enzymes. Has at least 2 reductase partners, only one of which (NorW, flavorubredoxin reductase) has been identified. NO probably binds to the di-iron center; electrons enter from the NorW at rubredoxin and are transferred sequentially to the FMN center and the di-iron center. Also able to function as an aerobic oxygen reductase. This Aliivibrio salmonicida (strain LFI1238) (Vibrio salmonicida (strain LFI1238)) protein is Anaerobic nitric oxide reductase flavorubredoxin.